The following is a 185-amino-acid chain: MVSTGEVRKGLTLIIDGELFRVMEANHVKQGRGTAFLRLTLRNVRTSATTVKTFMAGERFEVARLSTRNVQYLYREDNYIYVMNTETYDQFPVSVDLLEDALLYIRENETFDVLTYEDEVLDISLPPSVEMVVVETEPNYKGDTASGGGKPATTDTGLVVQVPSFVAVGERIRVDTTNGKYITRI.

Belongs to the elongation factor P family.

Its subcellular location is the cytoplasm. It functions in the pathway protein biosynthesis; polypeptide chain elongation. Its function is as follows. Involved in peptide bond synthesis. Stimulates efficient translation and peptide-bond synthesis on native or reconstituted 70S ribosomes in vitro. Probably functions indirectly by altering the affinity of the ribosome for aminoacyl-tRNA, thus increasing their reactivity as acceptors for peptidyl transferase. This chain is Elongation factor P, found in Herpetosiphon aurantiacus (strain ATCC 23779 / DSM 785 / 114-95).